A 157-amino-acid polypeptide reads, in one-letter code: Probable succinate transporter subunit YjjB (157 aa).

Helical transmembrane passes span 8-28 (LALM…AMVF), 34-54 (ALPW…LMMS), 55-75 (AGFN…SIGI), 87-107 (VFTV…TAMI), and 129-149 (FLKA…PGLW).

The protein belongs to the ThrE exporter (TC 2.A.79) family. As to quaternary structure, the transporter is composed of YjjB and YjjP.

Its subcellular location is the cell inner membrane. Its function is as follows. Involved in succinate export with YjjP. Both proteins are required for export. This is Probable succinate transporter subunit YjjB from Salmonella typhi.